A 300-amino-acid polypeptide reads, in one-letter code: Tyrosine recombinase XerC (300 aa).

Positions 2-88 constitute a Core-binding (CB) domain; it reads IQEGKLEQQF…SLRSFYTFLL (87 aa). A Tyr recombinase domain is found at 109-294; the sequence is RLPKFFYSEE…TKEHLKSTYM (186 aa). Residues R150, K174, H246, R249, and H272 contribute to the active site. Residue Y281 is the O-(3'-phospho-DNA)-tyrosine intermediate of the active site.

The protein belongs to the 'phage' integrase family. XerC subfamily. In terms of assembly, forms a cyclic heterotetrameric complex composed of two molecules of XerC and two molecules of XerD.

It is found in the cytoplasm. Site-specific tyrosine recombinase, which acts by catalyzing the cutting and rejoining of the recombining DNA molecules. The XerC-XerD complex is essential to convert dimers of the bacterial chromosome into monomers to permit their segregation at cell division. It also contributes to the segregational stability of plasmids. This chain is Tyrosine recombinase XerC, found in Listeria monocytogenes serotype 4b (strain F2365).